Reading from the N-terminus, the 404-residue chain is Phosphoglycerate kinase (404 aa).

Substrate contacts are provided by residues 21–23, Arg-36, 59–62, Arg-119, and Arg-162; these read DFN and HLGR. ATP contacts are provided by residues Lys-213, Gly-300, Glu-331, and 360–363; that span reads GGDS.

The protein belongs to the phosphoglycerate kinase family. As to quaternary structure, monomer.

It localises to the cytoplasm. The enzyme catalyses (2R)-3-phosphoglycerate + ATP = (2R)-3-phospho-glyceroyl phosphate + ADP. It functions in the pathway carbohydrate degradation; glycolysis; pyruvate from D-glyceraldehyde 3-phosphate: step 2/5. The polypeptide is Phosphoglycerate kinase (Oenococcus oeni (strain ATCC BAA-331 / PSU-1)).